The chain runs to 381 residues: Estradiol 17-beta-dehydrogenase 2 (381 aa).

A helical; Signal-anchor for type II membrane protein membrane pass occupies residues Phe4–Leu24. Gln83–Ala112 is a binding site for NAD(+). Ser220 contacts substrate. The active-site Proton acceptor is the Tyr233.

The protein belongs to the short-chain dehydrogenases/reductases (SDR) family. In terms of assembly, homodimer.

The protein localises to the endoplasmic reticulum membrane. The catalysed reaction is 17beta-estradiol + NAD(+) = estrone + NADH + H(+). It catalyses the reaction testosterone + NAD(+) = androst-4-ene-3,17-dione + NADH + H(+). The enzyme catalyses 17beta-hydroxy-5alpha-androstan-3-one + NAD(+) = 5alpha-androstan-3,17-dione + NADH + H(+). It carries out the reaction (20S)-hydroxypregn-4-en-3-one + NAD(+) = progesterone + NADH + H(+). In terms of biological role, catalyzes the NAD-dependent oxidation of highly active 17beta-hydroxysteroids, such as estradiol (E2), testosterone (T), and dihydrotestosterone (DHT), to their less active forms and thus regulates the biological potency of these steroids. Oxidizes estradiol to estrone, testosterone to androstenedione, and dihydrotestosterone to 5alpha-androstan-3,17-dione. Also has 20-alpha-HSD activity. This chain is Estradiol 17-beta-dehydrogenase 2 (Hsd17b2), found in Mus musculus (Mouse).